The following is a 258-amino-acid chain: Probable splicing factor, arginine/serine-rich 3 (258 aa).

An RRM 1 domain is found at 9-83 (QKVYVGNLPG…RRIRVEFTRG (75 aa)). Disordered regions lie at residues 81–120 (TRGV…PQRR) and 190–258 (AYIR…PSPQ). The segment covering 97 to 107 (GGDHRGGDFRG) has biased composition (basic and acidic residues). A compositionally biased stretch (gly residues) spans 108-117 (GRGGGRGGGP). The region spanning 123–197 (YRVIVEGLPP…ETAYIRVRED (75 aa)) is the RRM 2 domain. Over residues 208 to 223 (GRDRSRSRSPRAERRA) the composition is skewed to basic and acidic residues. The span at 228–246 (SPRRSRSRSRSRSRSRSRS) shows a compositional bias: basic residues. Residues 247–258 (ASRSPSRSPSPQ) are compositionally biased toward low complexity.

Belongs to the splicing factor SR family. In terms of assembly, interacts with spk-1. Directly phosphorylated by spk-1 in vitro on serine residues of the RS domain. Predominantly coexpressed with spk-1 in adult hermaphrodite germlines.

The protein localises to the nucleus. Plays an essential role in embryogenesis. This Caenorhabditis elegans protein is Probable splicing factor, arginine/serine-rich 3 (rsp-3).